The following is a 763-amino-acid chain: 5-methyltetrahydropteroyltriglutamate--homocysteine methyltransferase (763 aa).

Residues 16 to 19 (RELK) and Lys117 contribute to the 5-methyltetrahydropteroyltri-L-glutamate site. L-homocysteine is bound by residues 440–442 (IGS) and Glu493. L-methionine contacts are provided by residues 440–442 (IGS) and Glu493. 5-methyltetrahydropteroyltri-L-glutamate is bound by residues 524 to 525 (RC) and Trp570. Asp608 contributes to the L-homocysteine binding site. Asp608 contacts L-methionine. Glu614 serves as a coordination point for 5-methyltetrahydropteroyltri-L-glutamate. Residues His650, Cys652, and Glu674 each contribute to the Zn(2+) site. Catalysis depends on His703, which acts as the Proton donor. Cys735 lines the Zn(2+) pocket.

Belongs to the vitamin-B12 independent methionine synthase family. The cofactor is Zn(2+).

The catalysed reaction is 5-methyltetrahydropteroyltri-L-glutamate + L-homocysteine = tetrahydropteroyltri-L-glutamate + L-methionine. It functions in the pathway amino-acid biosynthesis; L-methionine biosynthesis via de novo pathway; L-methionine from L-homocysteine (MetE route): step 1/1. Functionally, catalyzes the transfer of a methyl group from 5-methyltetrahydrofolate to homocysteine resulting in methionine formation. This Alcanivorax borkumensis (strain ATCC 700651 / DSM 11573 / NCIMB 13689 / SK2) protein is 5-methyltetrahydropteroyltriglutamate--homocysteine methyltransferase.